Consider the following 283-residue polypeptide: Hydroxyacylglutathione hydrolase-like protein (283 aa).

His-54, His-56, Asp-58, His-59, His-110, Asp-134, and His-173 together coordinate Zn(2+).

It belongs to the metallo-beta-lactamase superfamily. Glyoxalase II family. Zn(2+) serves as cofactor.

In terms of biological role, hydrolase acting on ester bonds. The polypeptide is Hydroxyacylglutathione hydrolase-like protein (Haghl) (Mus musculus (Mouse)).